The primary structure comprises 277 residues: Large ribosomal subunit protein uL2 (277 aa).

Positions 222–277 (GVAMNPVDHPHGGGEGRTSGGRHPVSPWGKSTKGKRTRSNKATDKFIMHTRHQRKK) are disordered.

It belongs to the universal ribosomal protein uL2 family. In terms of assembly, part of the 50S ribosomal subunit. Forms a bridge to the 30S subunit in the 70S ribosome.

Functionally, one of the primary rRNA binding proteins. Required for association of the 30S and 50S subunits to form the 70S ribosome, for tRNA binding and peptide bond formation. It has been suggested to have peptidyltransferase activity; this is somewhat controversial. Makes several contacts with the 16S rRNA in the 70S ribosome. This chain is Large ribosomal subunit protein uL2, found in Bartonella quintana (strain Toulouse) (Rochalimaea quintana).